The chain runs to 200 residues: ATP-dependent Clp protease proteolytic subunit 2 (200 aa).

S99 serves as the catalytic Nucleophile. H124 is an active-site residue.

Belongs to the peptidase S14 family. In terms of assembly, fourteen ClpP subunits assemble into 2 heptameric rings which stack back to back to give a disk-like structure with a central cavity, resembling the structure of eukaryotic proteasomes.

It localises to the cytoplasm. The enzyme catalyses Hydrolysis of proteins to small peptides in the presence of ATP and magnesium. alpha-casein is the usual test substrate. In the absence of ATP, only oligopeptides shorter than five residues are hydrolyzed (such as succinyl-Leu-Tyr-|-NHMec, and Leu-Tyr-Leu-|-Tyr-Trp, in which cleavage of the -Tyr-|-Leu- and -Tyr-|-Trp bonds also occurs).. Cleaves peptides in various proteins in a process that requires ATP hydrolysis. Has a chymotrypsin-like activity. Plays a major role in the degradation of misfolded proteins. This Treponema denticola (strain ATCC 35405 / DSM 14222 / CIP 103919 / JCM 8153 / KCTC 15104) protein is ATP-dependent Clp protease proteolytic subunit 2.